Consider the following 543-residue polypeptide: Terpineol synthase, chloroplastic (543 aa).

Positions 1 to 22 (MNTEPSPNHYSAISSSDQNLTR) are disordered. Residues R263, D300, D304, R435, and N438 each contribute to the (2E)-geranyl diphosphate site. Mg(2+) contacts are provided by D300 and D304. A DDXXD motif motif is present at residues 300-304 (DDVYD). 3 residues coordinate Mg(2+): N438, T442, and E446.

It belongs to the terpene synthase family. Tpsb subfamily. As to quaternary structure, monomer. Mg(2+) is required as a cofactor. It depends on Mn(2+) as a cofactor. Confined to flowers.

The protein localises to the plastid. The protein resides in the chloroplast. The enzyme catalyses (2E)-geranyl diphosphate + H2O = (S)-alpha-terpineol + diphosphate. It catalyses the reaction (2E)-geranyl diphosphate = sabinene + diphosphate. The catalysed reaction is (2E)-geranyl diphosphate = beta-myrcene + diphosphate. It carries out the reaction (2E)-geranyl diphosphate = limonene + diphosphate. The enzyme catalyses (2E)-geranyl diphosphate + H2O = 1,8-cineole + diphosphate. Its pathway is secondary metabolite biosynthesis; terpenoid biosynthesis. In terms of biological role, monoterpene synthase (TPS) involved in the biosynthesis of monoterpene natural products of the 'cineole cassette', volatile compounds present in floral scent. Catalyzes the conversion of (2E)-geranyl diphosphate (GPP) into alpha-terpineol and, as minor products, sabinene, beta-myrcene, limonene and 1,8-cineole. This Nicotiana alata (Winged tobacco) protein is Terpineol synthase, chloroplastic.